The sequence spans 509 residues: Angiopoietin-4 (509 aa).

Residues Met-1–Ala-21 form the signal peptide. N-linked (GlcNAc...) asparagine glycans are attached at residues Asn-105, Asn-135, Asn-149, Asn-167, Asn-256, Asn-306, Asn-317, and Asn-417. The stretch at Leu-181–Glu-269 forms a coiled coil. Positions Lys-288–Gly-508 constitute a Fibrinogen C-terminal domain. A disulfide bond links Cys-297 and Cys-326. Residues Val-416 to Phe-436 are disordered. Residues Cys-450 and Cys-463 are joined by a disulfide bond.

In terms of assembly, homodimer; disulfide-linked. Interacts with TEK/TIE2. As to expression, widely expressed.

It is found in the secreted. Binds to TEK/TIE2, modulating ANGPT1 signaling. Can induce tyrosine phosphorylation of TEK/TIE2. Promotes endothelial cell survival, migration and angiogenesis. In Mus musculus (Mouse), this protein is Angiopoietin-4 (Angpt4).